Consider the following 286-residue polypeptide: Putative thiosulfate sulfurtransferase (286 aa).

A Rhodanese 1 domain is found at D27–D134. Glycyl lysine isopeptide (Lys-Gly) (interchain with G-Cter in SAMP2) cross-links involve residues K162 and K166. In terms of domain architecture, Rhodanese 2 spans V164–E283. The Cysteine persulfide intermediate role is filled by C242. Substrate is bound at residue R247.

It catalyses the reaction thiosulfate + hydrogen cyanide = thiocyanate + sulfite + 2 H(+). Its function is as follows. May be a sulfotransferase involved in the formation of thiosulfate. The polypeptide is Putative thiosulfate sulfurtransferase (tssA) (Haloferax volcanii (strain ATCC 29605 / DSM 3757 / JCM 8879 / NBRC 14742 / NCIMB 2012 / VKM B-1768 / DS2) (Halobacterium volcanii)).